Consider the following 185-residue polypeptide: Transposon Tn3 resolvase (185 aa).

A Resolvase/invertase-type recombinase catalytic domain is found at R2–G137. Catalysis depends on S10, which acts as the O-(5'-phospho-DNA)-serine intermediate. A DNA-binding region (H-T-H motif) is located at residues A161 to E180.

It belongs to the site-specific recombinase resolvase family.

Resolvase catalyzes the resolution (a site-specific recombination) of the cointegrated replicon to yield the final transposition products. This is Transposon Tn3 resolvase (tnpR) from Escherichia coli.